The sequence spans 200 residues: Small ribosomal subunit protein uS4c (200 aa).

Residues 91–154 (MRLDNVVFRL…NSRKMVTEAN (64 aa)) form the S4 RNA-binding domain.

Belongs to the universal ribosomal protein uS4 family. As to quaternary structure, part of the 30S ribosomal subunit. Contacts protein S5. The interaction surface between S4 and S5 is involved in control of translational fidelity.

It localises to the plastid. The protein localises to the chloroplast. One of the primary rRNA binding proteins, it binds directly to 16S rRNA where it nucleates assembly of the body of the 30S subunit. In terms of biological role, with S5 and S12 plays an important role in translational accuracy. In Oltmannsiellopsis viridis (Marine flagellate), this protein is Small ribosomal subunit protein uS4c (rps4).